The primary structure comprises 628 residues: DNA-directed RNA polymerase subunit beta' (628 aa).

Zn(2+) contacts are provided by cysteine 70, cysteine 72, cysteine 85, and cysteine 88. 3 residues coordinate Mg(2+): aspartate 472, aspartate 474, and aspartate 476.

This sequence belongs to the RNA polymerase beta' chain family. RpoC1 subfamily. In plastids the minimal PEP RNA polymerase catalytic core is composed of four subunits: alpha, beta, beta', and beta''. When a (nuclear-encoded) sigma factor is associated with the core the holoenzyme is formed, which can initiate transcription. Mg(2+) serves as cofactor. It depends on Zn(2+) as a cofactor.

The protein localises to the plastid. Its subcellular location is the chloroplast. It carries out the reaction RNA(n) + a ribonucleoside 5'-triphosphate = RNA(n+1) + diphosphate. In terms of biological role, DNA-dependent RNA polymerase catalyzes the transcription of DNA into RNA using the four ribonucleoside triphosphates as substrates. This is DNA-directed RNA polymerase subunit beta' from Gracilaria tenuistipitata var. liui (Red alga).